A 542-amino-acid chain; its full sequence is CTP synthase (542 aa).

The tract at residues 1–265 is amidoligase domain; that stretch reads MPRYIFITGG…DTEILRCFGI (265 aa). S13 is a CTP binding site. A UTP-binding site is contributed by S13. 14–19 contacts ATP; it reads SLGKGL. Y54 contributes to the L-glutamine binding site. D71 provides a ligand contact to ATP. D71 and E139 together coordinate Mg(2+). CTP-binding positions include 146-148, 186-191, and K222; these read DIE and KTKPTQ. UTP-binding positions include 186 to 191 and K222; that span reads KTKPTQ. 238–240 is an ATP binding site; it reads RDA. One can recognise a Glutamine amidotransferase type-1 domain in the interval 298–541; the sequence is YVGLLDAYKS…IAAALHQSRM (244 aa). Residue G353 coordinates L-glutamine. Catalysis depends on C380, which acts as the Nucleophile; for glutamine hydrolysis. L-glutamine-binding positions include 381–384, E404, and R469; that span reads YGMQ. Residues H514 and E516 contribute to the active site.

Belongs to the CTP synthase family. In terms of assembly, homotetramer.

The catalysed reaction is UTP + L-glutamine + ATP + H2O = CTP + L-glutamate + ADP + phosphate + 2 H(+). The enzyme catalyses L-glutamine + H2O = L-glutamate + NH4(+). It carries out the reaction UTP + NH4(+) + ATP = CTP + ADP + phosphate + 2 H(+). The protein operates within pyrimidine metabolism; CTP biosynthesis via de novo pathway; CTP from UDP: step 2/2. With respect to regulation, allosterically activated by GTP, when glutamine is the substrate; GTP has no effect on the reaction when ammonia is the substrate. The allosteric effector GTP functions by stabilizing the protein conformation that binds the tetrahedral intermediate(s) formed during glutamine hydrolysis. Inhibited by the product CTP, via allosteric rather than competitive inhibition. In terms of biological role, catalyzes the ATP-dependent amination of UTP to CTP with either L-glutamine or ammonia as the source of nitrogen. Regulates intracellular CTP levels through interactions with the four ribonucleotide triphosphates. This chain is CTP synthase, found in Maricaulis maris (strain MCS10) (Caulobacter maris).